The primary structure comprises 292 residues: Phosphatidylserine decarboxylase proenzyme (292 aa).

Active-site charge relay system; for autoendoproteolytic cleavage activity residues include aspartate 89, histidine 146, and serine 252. Serine 252 functions as the Schiff-base intermediate with substrate; via pyruvic acid; for decarboxylase activity in the catalytic mechanism. Serine 252 is subject to Pyruvic acid (Ser); by autocatalysis.

The protein belongs to the phosphatidylserine decarboxylase family. PSD-B subfamily. Prokaryotic type I sub-subfamily. As to quaternary structure, heterodimer of a large membrane-associated beta subunit and a small pyruvoyl-containing alpha subunit. It depends on pyruvate as a cofactor. In terms of processing, is synthesized initially as an inactive proenzyme. Formation of the active enzyme involves a self-maturation process in which the active site pyruvoyl group is generated from an internal serine residue via an autocatalytic post-translational modification. Two non-identical subunits are generated from the proenzyme in this reaction, and the pyruvate is formed at the N-terminus of the alpha chain, which is derived from the carboxyl end of the proenzyme. The autoendoproteolytic cleavage occurs by a canonical serine protease mechanism, in which the side chain hydroxyl group of the serine supplies its oxygen atom to form the C-terminus of the beta chain, while the remainder of the serine residue undergoes an oxidative deamination to produce ammonia and the pyruvoyl prosthetic group on the alpha chain. During this reaction, the Ser that is part of the protease active site of the proenzyme becomes the pyruvoyl prosthetic group, which constitutes an essential element of the active site of the mature decarboxylase.

The protein localises to the cell membrane. It carries out the reaction a 1,2-diacyl-sn-glycero-3-phospho-L-serine + H(+) = a 1,2-diacyl-sn-glycero-3-phosphoethanolamine + CO2. It functions in the pathway phospholipid metabolism; phosphatidylethanolamine biosynthesis; phosphatidylethanolamine from CDP-diacylglycerol: step 2/2. Functionally, catalyzes the formation of phosphatidylethanolamine (PtdEtn) from phosphatidylserine (PtdSer). The polypeptide is Phosphatidylserine decarboxylase proenzyme (Shewanella sp. (strain MR-7)).